Consider the following 102-residue polypeptide: C-X-C motif chemokine 10 (102 aa).

Residues 1–19 (MNKSGFLIFCLILLTLSQG) form the signal peptide. Arg24 carries the post-translational modification Citrulline. Cystine bridges form between Cys28–Cys55 and Cys30–Cys72.

It belongs to the intercrine alpha (chemokine CxC) family. In terms of assembly, monomer, dimer, and tetramer. Interacts with CXCR3 (via N-terminus).

Its subcellular location is the secreted. Pro-inflammatory cytokine that is involved in a wide variety of processes such as chemotaxis, differentiation, and activation of peripheral immune cells, regulation of cell growth, apoptosis and modulation of angiostatic effects. Plays thereby an important role during viral infections by stimulating the activation and migration of immune cells to the infected sites. Mechanistically, binding of CXCL10 to the CXCR3 receptor activates G protein-mediated signaling and results in downstream activation of phospholipase C-dependent pathway, an increase in intracellular calcium production and actin reorganization. In turn, recruitment of activated Th1 lymphocytes occurs at sites of inflammation. Activation of the CXCL10/CXCR3 axis also plays an important role in neurons in response to brain injury for activating microglia, the resident macrophage population of the central nervous system, and directing them to the lesion site. This recruitment is an essential element for neuronal reorganization. This chain is C-X-C motif chemokine 10 (CXCL10), found in Bos taurus (Bovine).